The sequence spans 52 residues: Transmembrane protein ORF52 (52 aa).

Transmembrane regions (helical) follow at residues 11–31 (AFLG…EIIT) and 32–52 (FMAL…GLFV).

It is found in the host membrane. This Acidianus filamentous virus 1 (isolate United States/Yellowstone) (AFV-1) protein is Transmembrane protein ORF52.